Here is a 333-residue protein sequence, read N- to C-terminus: Taste receptor type 2 member 38 (333 aa).

Residues 1–17 lie on the Extracellular side of the membrane; sequence MLTLTRIRTVSYEVRST. A helical membrane pass occupies residues 18–38; that stretch reads FLFISVLEFAVGFLTNAFVFL. Topologically, residues 39-55 are cytoplasmic; sequence VNFWDVVKRQPLSNSDC. Residues 56–76 traverse the membrane as a helical segment; it reads VLLCLSISRLFLHGLLFLSAI. The Extracellular segment spans residues 77-94; that stretch reads QLTHFQKLSEPLNHSYQA. The helical transmembrane segment at 95–115 threads the bilayer; the sequence is IIMLWMIANQANLWLAACLSL. Residues 116 to 142 are Cytoplasmic-facing; it reads LYCSKLIRFSHTFLICLASWVSRKISQ. A helical membrane pass occupies residues 143-163; that stretch reads MLLGIILCSCICTVLCVWCFF. Residues 164–190 are Extracellular-facing; the sequence is SRPHFTVTTVLFMNNNTRLNWQIKDLN. An N-linked (GlcNAc...) asparagine glycan is attached at asparagine 178. The helical transmembrane segment at 191–211 threads the bilayer; the sequence is LFYSFLFCYLWSVPPFLLFLV. Residues 212 to 251 lie on the Cytoplasmic side of the membrane; that stretch reads SSGMLTVSLGRHMRTMKVYIRDSRDPSLEAHIKALKSLVS. The helical transmembrane segment at 252-272 threads the bilayer; that stretch reads FFCFFVISSCAAFISVPLLIL. Topologically, residues 273–276 are extracellular; the sequence is WRDK. The helical transmembrane segment at 277–297 threads the bilayer; the sequence is IGVMVCVGIMAACPSGHAAVL. The Cytoplasmic portion of the chain corresponds to 298-333; it reads ISGNAKLRRAVTTILLWAQSSLKVRADHKADSRTPC.

This sequence belongs to the G-protein coupled receptor T2R family.

The protein localises to the membrane. In terms of biological role, receptor that may play a role in the perception of bitterness and is gustducin-linked. May play a role in sensing the chemical composition of the gastrointestinal content. The activity of this receptor may stimulate alpha gustducin, mediate PLC-beta-2 activation and lead to the gating of TRPM5. This Gorilla gorilla gorilla (Western lowland gorilla) protein is Taste receptor type 2 member 38 (TAS2R38).